The chain runs to 156 residues: MTTNPKPNKALKVKEESGENAPVLSDDELVSMSVRELNQHLRGLTKEEVIRLKQRRRTLKNRGYAASCRIKRVTQKEELERQRVELQQEVEKLARENSSMKLELDALRSKYEALQTFARTVARGPITPTKVATTSVITIVKSAEISSSSVPFSAAS.

Positions 1 to 21 (MTTNPKPNKALKVKEESGENA) are disordered. Residues 51–76 (RLKQRRRTLKNRGYAASCRIKRVTQK) form a basic motif region. Residues 51–114 (RLKQRRRTLK…DALRSKYEAL (64 aa)) form the bZIP domain. The segment at 79 to 93 (LERQRVELQQEVEKL) is leucine-zipper.

The protein belongs to the bZIP family. Maf subfamily. Homodimer or heterodimer.

It is found in the nucleus. Since they lack a putative transactivation domain, the small Mafs behave as transcriptional repressors when they dimerize among themselves. However, they act as transcriptional activators by dimerizing with other (usually larger) basic-zipper proteins and recruiting them to specific DNA-binding sites. Small Maf proteins heterodimerize with Fos and may act as competitive repressors of the NF-E2 transcription factor. The polypeptide is Transcription factor MafK (MAFK) (Gallus gallus (Chicken)).